A 1025-amino-acid chain; its full sequence is Serine/threonine-protein kinase TAO2 (1025 aa).

One can recognise a Protein kinase domain in the interval 28-281 (FADLREIGHG…SDMLLKHRFL (254 aa)). ATP contacts are provided by residues 34 to 42 (IGHGSFGAV) and lysine 57. The active-site Proton acceptor is the aspartate 151. Over residues 349–373 (ESSQSVPSMSISASSQSSSVNSLAD) the composition is skewed to low complexity. Residues 349-377 (ESSQSVPSMSISASSQSSSVNSLADASDD) are disordered. Coiled-coil stretches lie at residues 457-650 (SALR…ECAM) and 755-876 (ILKR…EIEA). 2 disordered regions span residues 899 to 930 (FNQG…QNTG) and 945 to 1025 (SASW…LSYS). The segment covering 905–914 (APPPGWPSRP) has biased composition (pro residues). The segment covering 947–986 (SWGLHPPGSSSSLSALPSSSSSSSSSPSSSSGGRPGLLLL) has biased composition (low complexity). Over residues 1007 to 1025 (SRSTSVTSQLSNGSHLSYS) the composition is skewed to polar residues.

It belongs to the protein kinase superfamily. STE Ser/Thr protein kinase family. STE20 subfamily. Mg(2+) serves as cofactor.

The catalysed reaction is L-seryl-[protein] + ATP = O-phospho-L-seryl-[protein] + ADP + H(+). It carries out the reaction L-threonyl-[protein] + ATP = O-phospho-L-threonyl-[protein] + ADP + H(+). In terms of biological role, serine/threonine-protein kinase involved in different processes such as apoptotic morphological changes, MAPK8/JNK and MAPK14/p38 MAPK signaling pathway. Activates the JNK MAP kinase pathway. The polypeptide is Serine/threonine-protein kinase TAO2 (taok2) (Xenopus laevis (African clawed frog)).